Reading from the N-terminus, the 247-residue chain is Uridylate kinase (247 aa).

An ATP-binding site is contributed by 15–18 (KLSG). The interval 23 to 28 (GEEGFG) is involved in allosteric activation by GTP. Glycine 57 is a UMP binding site. 2 residues coordinate ATP: glycine 58 and arginine 62. UMP contacts are provided by residues aspartate 77 and 138 to 145 (TGNPFCTT). Residues threonine 165, tyrosine 171, and aspartate 174 each contribute to the ATP site.

The protein belongs to the UMP kinase family. In terms of assembly, homohexamer.

Its subcellular location is the cytoplasm. The enzyme catalyses UMP + ATP = UDP + ADP. Its pathway is pyrimidine metabolism; CTP biosynthesis via de novo pathway; UDP from UMP (UMPK route): step 1/1. Its activity is regulated as follows. Allosterically activated by GTP. Inhibited by UTP. Functionally, catalyzes the reversible phosphorylation of UMP to UDP. The polypeptide is Uridylate kinase (Shewanella loihica (strain ATCC BAA-1088 / PV-4)).